The primary structure comprises 124 residues: Ribonuclease pancreatic (124 aa).

Basic and acidic residues predominate over residues 1 to 13; sequence KETAAAKFERQHM. A disordered region spans residues 1–24; that stretch reads KETAAAKFERQHMDSSTSSASSSN. The substrate site is built by lysine 7 and arginine 10. Histidine 12 (proton acceptor) is an active-site residue. Disulfide bonds link cysteine 26–cysteine 84, cysteine 40–cysteine 95, cysteine 58–cysteine 110, and cysteine 65–cysteine 72. Residues 41–45, lysine 66, and arginine 85 each bind substrate; that span reads KPVBT. Histidine 119 (proton donor) is an active-site residue.

Belongs to the pancreatic ribonuclease family. In terms of assembly, monomer. Interacts with and forms tight 1:1 complexes with RNH1. Dimerization of two such complexes may occur. Interaction with RNH1 inhibits this protein. Pancreas.

The protein localises to the secreted. It catalyses the reaction an [RNA] containing cytidine + H2O = an [RNA]-3'-cytidine-3'-phosphate + a 5'-hydroxy-ribonucleotide-3'-[RNA].. It carries out the reaction an [RNA] containing uridine + H2O = an [RNA]-3'-uridine-3'-phosphate + a 5'-hydroxy-ribonucleotide-3'-[RNA].. Endonuclease that catalyzes the cleavage of RNA on the 3' side of pyrimidine nucleotides. Acts on single-stranded and double-stranded RNA. The chain is Ribonuclease pancreatic (RNASE1) from Boselaphus tragocamelus (Nilgai).